The chain runs to 353 residues: N-methyltransferase (353 aa).

Residues serine 171, alanine 195, aspartate 218, aspartate 238, and lysine 252 each coordinate S-adenosyl-L-homocysteine. S-adenosyl-L-methionine is bound at residue aspartate 218.

Belongs to the class I-like SAM-binding methyltransferase superfamily. Cation-independent O-methyltransferase family. Homodimer. Expressed at high levels in all tissues.

The catalysed reaction is 3-methoxytyramine + S-adenosyl-L-methionine = N-methyl-3-methoxytyramine + S-adenosyl-L-homocysteine + H(+). It catalyses the reaction mescaline + S-adenosyl-L-methionine = N-methylmescaline + S-adenosyl-L-homocysteine + H(+). It carries out the reaction tyramine + S-adenosyl-L-methionine = N-methyltyramine + S-adenosyl-L-homocysteine + H(+). The enzyme catalyses 4-hydroxy-3,5-dimethoxyphenethylamine + S-adenosyl-L-methionine = N-methyl-4-hydroxy-3,5-dimethoxyphenethylamine + S-adenosyl-L-homocysteine + H(+). It participates in aromatic compound metabolism. It functions in the pathway alkaloid biosynthesis. Its function is as follows. N-methyltransferase participating in the biosynthesis of natural products derived from phenylethylamine, including mescaline, a natural hallucinogen potentially used in psychotherapeutic treatments. Catalyzes the N-methylation of many substrates, including 3-methoxytyramine, 5-hydroxy-3,4-dimethoxyphenethylamine, 4-hydroxy-3,5-dimethoxyphenethylamine, tyramine and mescaline. The protein is N-methyltransferase of Lophophora williamsii (Peyote).